Here is a 206-residue protein sequence, read N- to C-terminus: Uridine kinase (206 aa).

11–18 (GGSASGKT) lines the ATP pocket.

The protein belongs to the uridine kinase family.

The protein resides in the cytoplasm. It carries out the reaction uridine + ATP = UMP + ADP + H(+). It catalyses the reaction cytidine + ATP = CMP + ADP + H(+). It functions in the pathway pyrimidine metabolism; CTP biosynthesis via salvage pathway; CTP from cytidine: step 1/3. It participates in pyrimidine metabolism; UMP biosynthesis via salvage pathway; UMP from uridine: step 1/1. This chain is Uridine kinase, found in Lactococcus lactis subsp. lactis (strain IL1403) (Streptococcus lactis).